We begin with the raw amino-acid sequence, 259 residues long: NAD(P)H-quinone oxidoreductase subunit K 2 (259 aa).

Residues Cys52, Cys53, Cys117, and Cys148 each contribute to the [4Fe-4S] cluster site.

It belongs to the complex I 20 kDa subunit family. As to quaternary structure, NDH-1 can be composed of about 15 different subunits; different subcomplexes with different compositions have been identified which probably have different functions. Requires [4Fe-4S] cluster as cofactor.

The protein localises to the cellular thylakoid membrane. It catalyses the reaction a plastoquinone + NADH + (n+1) H(+)(in) = a plastoquinol + NAD(+) + n H(+)(out). The catalysed reaction is a plastoquinone + NADPH + (n+1) H(+)(in) = a plastoquinol + NADP(+) + n H(+)(out). Its function is as follows. NDH-1 shuttles electrons from an unknown electron donor, via FMN and iron-sulfur (Fe-S) centers, to quinones in the respiratory and/or the photosynthetic chain. The immediate electron acceptor for the enzyme in this species is believed to be plastoquinone. Couples the redox reaction to proton translocation, and thus conserves the redox energy in a proton gradient. Cyanobacterial NDH-1 also plays a role in inorganic carbon-concentration. This Cyanothece sp. (strain PCC 7425 / ATCC 29141) protein is NAD(P)H-quinone oxidoreductase subunit K 2 (ndhK2).